We begin with the raw amino-acid sequence, 415 residues long: Tumor necrosis factor receptor superfamily member 3 (415 aa).

Residues 1-30 form the signal peptide; it reads MRLPRASSPCGLAWGPLLLGLSGLLVASQP. At 31–223 the chain is on the extracellular side; the sequence is QLVPPYRIEN…NPPEPGAMLL (193 aa). An N-linked (GlcNAc...) asparagine glycan is attached at N40. 4 TNFR-Cys repeats span residues 42-81, 82-124, 125-170, and 171-213; these read TCWDQDKEYYEPMHDVCCSRCPPGEFVFAVCSRSQDTVCK, TCPH…KAEC, RCQP…VNCV, and PCKP…TICK. 10 cysteine pairs are disulfide-bonded: C43–C58, C59–C72, C62–C80, C83–C98, C101–C116, C104–C124, C126–C132, C139–C150, C142–C169, and C172–C187. N179 carries N-linked (GlcNAc...) asparagine glycosylation. A helical membrane pass occupies residues 224-244; the sequence is LAILLSLVLFLLFTTVLACAW. Residues 245 to 415 are Cytoplasmic-facing; it reads MRHPSLCRKL…ETETLGCQDL (171 aa). Positions 261-304 are disordered; that stretch reads HPEGEESPPCPAPRADPHFPDLAEPLLPMSGDLSPSPAGPPTAP. S315 bears the Phosphoserine mark. Positions 361–399 are disordered; that stretch reads LGGTRGPGDPPAPPEPPYPTPEEGAPGPSELSTPYQEDG. The span at 368 to 380 shows a compositional bias: pro residues; sequence GDPPAPPEPPYPT.

In terms of assembly, self-associates; dimerization and trimerization are promoted by lymphotoxin (LTA(3)). Associates with TRAF3. Associates with TRAF4. Associates with TRAF5.

It localises to the membrane. Receptor for the heterotrimeric lymphotoxin containing LTA and LTB, and for TNFS14/LIGHT. Activates NF-kappa-B signaling upon stimulation with lymphotoxin. Promotes apoptosis via TRAF3 and TRAF5. May play a role in the development of lymphoid organs. Functionally, (Microbial infection) Plays a role in host defense against Zika virus infection. The polypeptide is Tumor necrosis factor receptor superfamily member 3 (Ltbr) (Mus musculus (Mouse)).